The chain runs to 315 residues: Malate dehydrogenase (315 aa).

Residues 11 to 16 and D35 each bind NAD(+); that span reads GAGHVG. Positions 84 and 90 each coordinate substrate. Residues N97 and 120-122 contribute to the NAD(+) site; that span reads VTN. N122 and R153 together coordinate substrate. Residue H177 is the Proton acceptor of the active site.

This sequence belongs to the LDH/MDH superfamily. MDH type 3 family.

The enzyme catalyses (S)-malate + NAD(+) = oxaloacetate + NADH + H(+). Functionally, catalyzes the reversible oxidation of malate to oxaloacetate. The chain is Malate dehydrogenase from Thermosulfidibacter takaii (strain DSM 17441 / JCM 13301 / NBRC 103674 / ABI70S6).